The primary structure comprises 629 residues: Serine/threonine-protein kinase ICK (629 aa).

The Protein kinase domain occupies 4 to 284 (YTTIKQLGDG…ASQALRYPYF (281 aa)). Residues 10 to 18 (LGDGTYGSV) and Lys33 each bind ATP. Catalysis depends on Asp125, which acts as the Proton acceptor. At Thr157 the chain carries Phosphothreonine; by CDK7. Tyr159 is subject to Phosphotyrosine. A Phosphoserine modification is found at Ser161. 3 disordered regions span residues 292–376 (IISK…SLHN), 455–483 (SESV…SSAK), and 581–629 (SSLK…PSRR). Positions 296–306 (DSGKPQREVQD) are enriched in basic and acidic residues. Residues 309 to 321 (GPPPYIKPAPPAQ) are compositionally biased toward pro residues. 2 stretches are compositionally biased toward low complexity: residues 322 to 344 (APAK…PQHS) and 457 to 470 (SVGT…QASS).

This sequence belongs to the protein kinase superfamily. CMGC Ser/Thr protein kinase family. CDC2/CDKX subfamily. Mg(2+) serves as cofactor. Post-translationally, autophosphorylated on serine and threonine residues. Phosphorylation at Thr-157 by CDK7/Cak1p increases kinase activity. In terms of tissue distribution, highly expressed in colon and lung, lower levels present in heart, esophagus, stomach, small intestine and ovary. Localizes to the crypt region of large and small intestine.

The protein localises to the cytoplasm. It localises to the cytosol. It is found in the cell projection. Its subcellular location is the cilium. The protein resides in the nucleus. The protein localises to the cytoskeleton. It localises to the cilium basal body. The catalysed reaction is L-seryl-[protein] + ATP = O-phospho-L-seryl-[protein] + ADP + H(+). It carries out the reaction L-threonyl-[protein] + ATP = O-phospho-L-threonyl-[protein] + ADP + H(+). In terms of biological role, has an essential role in ciliogenesis, particularly in neuronal and retinal progenitor cells. Phosphorylates KIF3A. Involved in the control of ciliary length. Regulates the ciliary localization of SHH pathway components as well as the localization of IFT components at ciliary tips. May play a role in cardiac development. Regulates intraflagellar transport (IFT) speed and negatively regulates cilium length in a cAMP and mTORC1 signaling -dependent manner and this regulation requires its kinase activity. The chain is Serine/threonine-protein kinase ICK (Cilk1) from Mus musculus (Mouse).